The sequence spans 369 residues: Putative F-box protein At1g70960 (369 aa).

Positions 3 to 54 constitute an F-box domain; it reads NTSFETLPRHMQMEILSRVPLKFLMKFMCVSKKWASIIRGEEFREDYLFQSM.

The chain is Putative F-box protein At1g70960 from Arabidopsis thaliana (Mouse-ear cress).